A 179-amino-acid polypeptide reads, in one-letter code: Peptide deformylase (179 aa).

Fe cation contacts are provided by Cys102 and His144. Residue Glu145 is part of the active site. Residue His148 participates in Fe cation binding.

Belongs to the polypeptide deformylase family. It depends on Fe(2+) as a cofactor.

It carries out the reaction N-terminal N-formyl-L-methionyl-[peptide] + H2O = N-terminal L-methionyl-[peptide] + formate. In terms of biological role, removes the formyl group from the N-terminal Met of newly synthesized proteins. Requires at least a dipeptide for an efficient rate of reaction. N-terminal L-methionine is a prerequisite for activity but the enzyme has broad specificity at other positions. The protein is Peptide deformylase of Wolbachia sp. subsp. Drosophila simulans (strain wRi).